The sequence spans 1134 residues: Spermatogenesis-associated protein 31C2 (1134 aa).

Residues 23–43 (PWVLDIFLTLVFALGFFFLLL) form a helical membrane-spanning segment. Disordered regions lie at residues 54–87 (PPSP…NHSL), 115–243 (LEKG…LLTP), 477–504 (PGTS…EAQT), 524–561 (TPQN…DSGS), 727–807 (MPER…PTVP), 928–1007 (NMGH…PSIS), and 1111–1134 (AASS…IRDQ). The segment covering 59-87 (PKKRKRHLVSQRPAGRRGRPRGRMKNHSL) has biased composition (basic residues). Positions 132 to 148 (VGKRTPDGASRSSHEPT) are enriched in basic and acidic residues. Over residues 185–201 (SSLSASQPPEPSLLLEH) the composition is skewed to low complexity. The span at 204–235 (PEPPALFPHPPRTPDPLACSPPPPKGFTPPPL) shows a compositional bias: pro residues. Positions 489 to 504 (WQSSTSTGESSKEAQT) are enriched in polar residues. Composition is skewed to polar residues over residues 773–794 (LTYS…SSRA) and 937–948 (PNCQGSCKSQSP). Positions 954–970 (HKRENSRKPNLEKHEEM) are enriched in basic and acidic residues. The segment covering 1111 to 1124 (AASSQQATLKNQSR) has biased composition (polar residues). The segment covering 1125–1134 (PNRDRQIRDQ) has biased composition (basic and acidic residues).

It belongs to the SPATA31 family.

It localises to the membrane. May play a role in spermatogenesis. This is Spermatogenesis-associated protein 31C2 (SPATA31C2) from Homo sapiens (Human).